The following is a 329-amino-acid chain: Endo-beta-N-acetylglucosaminidase F3 (329 aa).

A signal peptide (or 40, or 41) is located at residues 1-39; it reads MKKIFFAQCSILLLMLGSCSKMTEDMTPESVNKEASVKS. The 282-residue stretch at 48-329 folds into the GH18 domain; the sequence is GVCIAYYITD…ANAVRDAVKN (282 aa). The O-linked (Man...) threonine glycan is linked to T88. E167 functions as the Proton donor in the catalytic mechanism.

This sequence belongs to the glycosyl hydrolase 18 family. Monomer. In terms of processing, carbohydrate at Thr-88 consists of (2-OMe)Man1-4GlcNAcU1-4GlcU1-4Glc1-4(2-OMe)GlcU1-4[(2-OMe)Rham1-2]Man.

The protein resides in the secreted. It carries out the reaction an N(4)-(oligosaccharide-(1-&gt;3)-[oligosaccharide-(1-&gt;6)]-beta-D-Man-(1-&gt;4)-beta-D-GlcNAc-(1-&gt;4)-alpha-D-GlcNAc)-L-asparaginyl-[protein] + H2O = an oligosaccharide-(1-&gt;3)-[oligosaccharide-(1-&gt;6)]-beta-D-Man-(1-&gt;4)-D-GlcNAc + N(4)-(N-acetyl-beta-D-glucosaminyl)-L-asparaginyl-[protein]. Its function is as follows. Endohydrolysis of the di-N-acetylchitobiosyl unit in high-mannose glycopeptides and glycoproteins. Hydrolyzes bi- and triantennary glycans. The presence of a core-bound fucose greatly augments endo F3 activity on biantennary and, presumably, triantennary oligosaccharides. This chain is Endo-beta-N-acetylglucosaminidase F3 (endOF3), found in Elizabethkingia meningoseptica (Chryseobacterium meningosepticum).